We begin with the raw amino-acid sequence, 100 residues long: Large ribosomal subunit protein uL23 (100 aa).

The protein belongs to the universal ribosomal protein uL23 family. In terms of assembly, part of the 50S ribosomal subunit. Contacts protein L29, and trigger factor when it is bound to the ribosome.

Functionally, one of the early assembly proteins it binds 23S rRNA. One of the proteins that surrounds the polypeptide exit tunnel on the outside of the ribosome. Forms the main docking site for trigger factor binding to the ribosome. The protein is Large ribosomal subunit protein uL23 of Vibrio cholerae serotype O1 (strain ATCC 39541 / Classical Ogawa 395 / O395).